The following is a 339-amino-acid chain: MEQLQNLIRDALKAIDGATDTQALDALRVQYLGKKGVLTEQLKALGKLPPEERPAAGQAINRAKETVNEALSARLEALSAAEQEARLALESVDVTLPGRRQAVGGLHPVTRTIERITDLLGQLGFQVAEGPEVEDDYHNFEALNIPAHHPARAMHDTFYFDANRLLRTHTSPVQVRVMEQGRPPFRVIAPGRVYRCDSDLTHSPMFHQVEGLLVDEGVTFAHLRGVLDAFLQAFFEQSELKTRFRPSYFPFTEPSAEVDIQCVHCGGDGCRVCSHTGWLEVMGCGMVHPNVFAHVGIDSERYTGFAFGLGVERMAMLRYGVNDLRLFFENDVRFLRQFA.

E253 serves as a coordination point for Mg(2+).

This sequence belongs to the class-II aminoacyl-tRNA synthetase family. Phe-tRNA synthetase alpha subunit type 1 subfamily. As to quaternary structure, tetramer of two alpha and two beta subunits. The cofactor is Mg(2+).

It is found in the cytoplasm. It catalyses the reaction tRNA(Phe) + L-phenylalanine + ATP = L-phenylalanyl-tRNA(Phe) + AMP + diphosphate + H(+). The sequence is that of Phenylalanine--tRNA ligase alpha subunit from Thioalkalivibrio sulfidiphilus (strain HL-EbGR7).